Consider the following 477-residue polypeptide: Charged multivesicular body protein 7 (477 aa).

2 coiled-coil regions span residues 252–280 (KLQTTYETLKQQESKLLTDIEEISNTIKE) and 382–428 (ESLS…QQQQ). Basic and acidic residues-rich tracts occupy residues 411 to 424 (EEKQKQKQIEKEKQ) and 465 to 477 (KQDENKQKTSELI). Positions 411-477 (EEKQKQKQIE…ENKQKTSELI (67 aa)) are disordered.

The protein belongs to the SNF7 family.

The protein localises to the cytoplasm. Its function is as follows. Plays a role in the endosomal sorting pathway. This Dictyostelium discoideum (Social amoeba) protein is Charged multivesicular body protein 7 (chmp7).